A 118-amino-acid polypeptide reads, in one-letter code: MSKGLSLFERRRRRVRTALRARGGLRPRLSVHRSGRHIYAQVIDDEAGRTVASASTLDKDMKGKTGATADAAASVGKAVAERAKAAGVTQVVFDRGGFLFHGRVKALADAAREGGLEF.

This sequence belongs to the universal ribosomal protein uL18 family. In terms of assembly, part of the 50S ribosomal subunit; part of the 5S rRNA/L5/L18/L25 subcomplex. Contacts the 5S and 23S rRNAs.

Functionally, this is one of the proteins that bind and probably mediate the attachment of the 5S RNA into the large ribosomal subunit, where it forms part of the central protuberance. The chain is Large ribosomal subunit protein uL18 from Rhizorhabdus wittichii (strain DSM 6014 / CCUG 31198 / JCM 15750 / NBRC 105917 / EY 4224 / RW1) (Sphingomonas wittichii).